Reading from the N-terminus, the 150-residue chain is UPF0336 protein SAV_4901 (150 aa).

Positions 8–126 (VGRSYPPTDP…GNDVVDVRGE (119 aa)) constitute a MaoC-like domain.

This sequence belongs to the UPF0336 family.

The sequence is that of UPF0336 protein SAV_4901 from Streptomyces avermitilis (strain ATCC 31267 / DSM 46492 / JCM 5070 / NBRC 14893 / NCIMB 12804 / NRRL 8165 / MA-4680).